Consider the following 1085-residue polypeptide: Solute carrier family 12 member 4 (1085 aa).

Over 1-119 (MPHFTVVPVD…RRAAEAPSMG (119 aa)) the chain is Cytoplasmic. A phosphoserine mark is found at Ser24, Ser47, Ser51, Ser81, and Ser88. Residues 120 to 141 (TLMGVYLPCLQNIFGVILFLRL) form a discontinuously helical membrane-spanning segment. Asn131 and Ile132 together coordinate K(+). The Extracellular portion of the chain corresponds to 142–149 (TWMVGTAG). The helical transmembrane segment at 150-172 (VLQALLIVLICCCCTLLTAISMS) threads the bilayer. Residues 173–196 (AIATNGVVPAGGSYFMISRSLGPE) lie on the Cytoplasmic side of the membrane. Residues 197-225 (FGGAVGLCFYLGTTFAAAMYILGAIEILL) form a helical membrane-spanning segment. A K(+)-binding site is contributed by Tyr216. The Extracellular segment spans residues 226-248 (TYIAPPAAIFYPSGAHDTSNATL). The N-linked (GlcNAc...) asparagine glycan is linked to Asn245. 2 consecutive transmembrane segments (helical) span residues 249–271 (NNMRVYGTIFLTFMTLVVFVGVK) and 272–297 (YVNKFASLFLACVIISILSIYAGGIK). The Extracellular segment spans residues 298 to 419 (SIFDPPVFPV…LYVVADIATS (122 aa)). An intrachain disulfide couples Cys308 to Cys323. 4 N-linked (GlcNAc...) asparagine glycosylation sites follow: Asn312, Asn331, Asn347, and Asn361. A disulfide bridge links Cys343 with Cys353. A helical transmembrane segment spans residues 420-440 (FTVLVGIFFPSVTGIMAGSNR). Residues Pro429 and Thr432 each contribute to the K(+) site. Positions 433, 434, and 435 each coordinate chloride. At 441–450 (SGDLRDAQKS) the chain is on the cytoplasmic side. Residues 451-473 (IPVGTILAIITTSLVYFSSVVLF) traverse the membrane as a helical segment. Over 474–504 (GACIEGVVLRDKYGDGVSRNLVVGTLAWPSP) the chain is Extracellular. The chain crosses the membrane as a helical span at residues 505–531 (WVIVIGSFFSTCGAGLQSLTGAPRLLQ). Topologically, residues 532-554 (AIAKDNIIPFLRVFGHGKVNGEP) are cytoplasmic. 2 helical membrane-spanning segments follow: residues 555–575 (TWALLLTALIAELGILIASLD) and 576–598 (MVAPILSMFFLMCYLFVNLACAV). Residue Tyr589 participates in chloride binding. Residues 599–612 (QTLLRTPNWRPRFK) are Cytoplasmic-facing. 2 helical membrane passes run 613-635 (YYHWALSFLGMSLCLALMFVSSW) and 636-651 (YYALVAMLIAGMIYKY). Residues 652–1085 (IEYQGAEKEW…GGREVITIYS (434 aa)) lie on the Cytoplasmic side of the membrane. The scissor helix stretch occupies residues 665 to 681 (IRGLSLSAARYALLRLE). Residues Leu697, Lys699, Lys707, Tyr708, and Val730 each contribute to the ATP site. Residue Ser734 is modified to Phosphoserine. Gly794, Trp795, and Tyr797 together coordinate ATP. Phosphoserine is present on residues Ser916 and Ser967. Thr983 is modified (phosphothreonine). At Ser1050 the chain carries Phosphoserine.

This sequence belongs to the SLC12A transporter family. K/Cl co-transporter subfamily. As to quaternary structure, homodimer; adopts a domain-swap conformation at the scissor helices connecting the transmembrane domain and C-terminal domain. Heterodimer with other K-Cl cotransporters. Phosphorylated, phosphorylation may regulate transporter activity. In terms of tissue distribution, ubiquitous. Levels are much higher in erythrocytes from patients with Hb SC and Hb SS compared to normal AA erythrocytes. This may contribute to red blood cell dehydration and to the manifestation of sickle cell disease by increasing the intracellular concentration of HbS. Not detected in circulating reticulocytes.

It is found in the cell membrane. The catalysed reaction is K(+)(in) + chloride(in) = K(+)(out) + chloride(out). Its activity is regulated as follows. Inhibited by WNK3. Functionally, mediates electroneutral potassium-chloride cotransport when activated by cell swelling. May contribute to cell volume homeostasis in single cells. May be involved in the regulation of basolateral Cl(-) exit in NaCl absorbing epithelia. Its function is as follows. No transporter activity. This chain is Solute carrier family 12 member 4, found in Homo sapiens (Human).